A 320-amino-acid chain; its full sequence is Malate dehydrogenase (320 aa).

Residues 10-15 (GSGMIG) and aspartate 34 each bind NAD(+). Substrate-binding residues include arginine 83 and arginine 89. NAD(+) contacts are provided by residues asparagine 96 and 119–121 (ITN). The substrate site is built by asparagine 121 and arginine 152. Residue histidine 176 is the Proton acceptor of the active site.

This sequence belongs to the LDH/MDH superfamily. MDH type 3 family.

It catalyses the reaction (S)-malate + NAD(+) = oxaloacetate + NADH + H(+). Functionally, catalyzes the reversible oxidation of malate to oxaloacetate. This chain is Malate dehydrogenase, found in Agrobacterium fabrum (strain C58 / ATCC 33970) (Agrobacterium tumefaciens (strain C58)).